We begin with the raw amino-acid sequence, 419 residues long: Serine--tRNA ligase (419 aa).

226–228 (TSE) is a binding site for L-serine. ATP is bound by residues 257–259 (RRE) and Val273. L-serine is bound at residue Glu280. An ATP-binding site is contributed by 344–347 (ELTS). An L-serine-binding site is contributed by Thr379.

The protein belongs to the class-II aminoacyl-tRNA synthetase family. Type-1 seryl-tRNA synthetase subfamily. As to quaternary structure, homodimer. The tRNA molecule binds across the dimer.

Its subcellular location is the cytoplasm. The enzyme catalyses tRNA(Ser) + L-serine + ATP = L-seryl-tRNA(Ser) + AMP + diphosphate + H(+). It carries out the reaction tRNA(Sec) + L-serine + ATP = L-seryl-tRNA(Sec) + AMP + diphosphate + H(+). It functions in the pathway aminoacyl-tRNA biosynthesis; selenocysteinyl-tRNA(Sec) biosynthesis; L-seryl-tRNA(Sec) from L-serine and tRNA(Sec): step 1/1. Its function is as follows. Catalyzes the attachment of serine to tRNA(Ser). Is also able to aminoacylate tRNA(Sec) with serine, to form the misacylated tRNA L-seryl-tRNA(Sec), which will be further converted into selenocysteinyl-tRNA(Sec). This Corynebacterium efficiens (strain DSM 44549 / YS-314 / AJ 12310 / JCM 11189 / NBRC 100395) protein is Serine--tRNA ligase.